Consider the following 613-residue polypeptide: DNA polymerase II small subunit (613 aa).

Belongs to the DNA polymerase delta/II small subunit family. As to quaternary structure, heterodimer of a large subunit and a small subunit.

The enzyme catalyses DNA(n) + a 2'-deoxyribonucleoside 5'-triphosphate = DNA(n+1) + diphosphate. The catalysed reaction is Exonucleolytic cleavage in the 3'- to 5'-direction to yield nucleoside 5'-phosphates.. Possesses two activities: a DNA synthesis (polymerase) and an exonucleolytic activity that degrades single-stranded DNA in the 3' to 5' direction. Has a template-primer preference which is characteristic of a replicative DNA polymerase. In Pyrococcus furiosus (strain ATCC 43587 / DSM 3638 / JCM 8422 / Vc1), this protein is DNA polymerase II small subunit (polB).